Consider the following 228-residue polypeptide: 7-cyano-7-deazaguanine synthase (228 aa).

9–19 lines the ATP pocket; it reads LSGGPDSTTVL. Residues Cys193, Cys203, Cys206, and Cys209 each coordinate Zn(2+).

Belongs to the QueC family. Zn(2+) serves as cofactor.

The enzyme catalyses 7-carboxy-7-deazaguanine + NH4(+) + ATP = 7-cyano-7-deazaguanine + ADP + phosphate + H2O + H(+). The protein operates within purine metabolism; 7-cyano-7-deazaguanine biosynthesis. Catalyzes the ATP-dependent conversion of 7-carboxy-7-deazaguanine (CDG) to 7-cyano-7-deazaguanine (preQ(0)). In Rickettsia peacockii (strain Rustic), this protein is 7-cyano-7-deazaguanine synthase.